The sequence spans 198 residues: Translation machinery-associated protein 22 (198 aa).

One can recognise an SUI1 domain in the interval 99-170; it reads VIIKREARTK…EVETYIHSLL (72 aa).

It belongs to the DENR family. As to quaternary structure, interacts with the 40S ribosomal subunit.

It localises to the cytoplasm. The polypeptide is Translation machinery-associated protein 22 (TMA22) (Saccharomyces cerevisiae (strain YJM789) (Baker's yeast)).